The primary structure comprises 340 residues: Phosphoribosylformylglycinamidine cyclo-ligase (340 aa).

The protein belongs to the AIR synthase family.

The protein localises to the cytoplasm. It carries out the reaction 2-formamido-N(1)-(5-O-phospho-beta-D-ribosyl)acetamidine + ATP = 5-amino-1-(5-phospho-beta-D-ribosyl)imidazole + ADP + phosphate + H(+). The protein operates within purine metabolism; IMP biosynthesis via de novo pathway; 5-amino-1-(5-phospho-D-ribosyl)imidazole from N(2)-formyl-N(1)-(5-phospho-D-ribosyl)glycinamide: step 2/2. In Lactococcus lactis subsp. cremoris (strain MG1363), this protein is Phosphoribosylformylglycinamidine cyclo-ligase.